A 145-amino-acid chain; its full sequence is Large ribosomal subunit protein mL59 (145 aa).

Basic and acidic residues predominate over residues 123-135 (LKKTSKFKNERQK). The interval 123–145 (LKKTSKFKNERQKASKIAKPSPF) is disordered.

It belongs to the mitochondrion-specific ribosomal protein mL59 family. In terms of assembly, component of the mitochondrial large ribosomal subunit (mt-LSU). Mature yeast 74S mitochondrial ribosomes consist of a small (37S) and a large (54S) subunit. The 37S small subunit contains a 15S ribosomal RNA (15S mt-rRNA) and at least 32 different proteins. The 54S large subunit contains a 21S rRNA (21S mt-rRNA) and at least 45 different proteins.

It localises to the mitochondrion. Component of the mitochondrial ribosome (mitoribosome), a dedicated translation machinery responsible for the synthesis of mitochondrial genome-encoded proteins, including at least some of the essential transmembrane subunits of the mitochondrial respiratory chain. The mitoribosomes are attached to the mitochondrial inner membrane and translation products are cotranslationally integrated into the membrane. This is Large ribosomal subunit protein mL59 (mrpl25) from Schizosaccharomyces pombe (strain 972 / ATCC 24843) (Fission yeast).